The following is a 166-amino-acid chain: Bacterial non-heme ferritin (166 aa).

Residues 2-145 (LSKNLLEALN…THINYLTRIG (144 aa)) enclose the Ferritin-like diiron domain. Positions 17, 50, 53, 94, and 127 each coordinate Fe cation.

This sequence belongs to the ferritin family. Prokaryotic subfamily.

The protein localises to the cytoplasm. It carries out the reaction 4 Fe(2+) + O2 + 6 H2O = 4 iron(III) oxide-hydroxide + 12 H(+). In terms of biological role, iron-storage protein. The sequence is that of Bacterial non-heme ferritin (ftnA) from Staphylococcus aureus (strain USA300).